Reading from the N-terminus, the 333-residue chain is L-lactate dehydrogenase A chain (333 aa).

NAD(+) is bound by residues 30–58 (GMVG…MEDK) and Arg-100. Substrate contacts are provided by Arg-107, Asn-139, and Arg-170. Asn-139 contacts NAD(+). His-194 (proton acceptor) is an active-site residue. Substrate is bound at residue Thr-249.

It belongs to the LDH/MDH superfamily. LDH family. Homotetramer.

It localises to the cytoplasm. It carries out the reaction (S)-lactate + NAD(+) = pyruvate + NADH + H(+). The protein operates within fermentation; pyruvate fermentation to lactate; (S)-lactate from pyruvate: step 1/1. Interconverts simultaneously and stereospecifically pyruvate and lactate with concomitant interconversion of NADH and NAD(+). This chain is L-lactate dehydrogenase A chain (ldha), found in Danio rerio (Zebrafish).